The primary structure comprises 285 residues: Pantothenate synthetase (285 aa).

An ATP-binding site is contributed by 30-37; it reads MGYLHEGH. The active-site Proton donor is histidine 37. A (R)-pantoate-binding site is contributed by glutamine 61. A beta-alanine-binding site is contributed by glutamine 61. 148–151 is a binding site for ATP; sequence GKKD. A (R)-pantoate-binding site is contributed by glutamine 154. Residues valine 177 and 185–188 each bind ATP; that span reads LSSR.

This sequence belongs to the pantothenate synthetase family. As to quaternary structure, homodimer.

Its subcellular location is the cytoplasm. It catalyses the reaction (R)-pantoate + beta-alanine + ATP = (R)-pantothenate + AMP + diphosphate + H(+). The protein operates within cofactor biosynthesis; (R)-pantothenate biosynthesis; (R)-pantothenate from (R)-pantoate and beta-alanine: step 1/1. In terms of biological role, catalyzes the condensation of pantoate with beta-alanine in an ATP-dependent reaction via a pantoyl-adenylate intermediate. The sequence is that of Pantothenate synthetase from Leptospira interrogans serogroup Icterohaemorrhagiae serovar Lai (strain 56601).